The primary structure comprises 282 residues: Probable septum site-determining protein MinC (282 aa).

The interval 108-127 is disordered; sequence AAARSADEESANAAAAAPAA. The span at 118 to 127 shows a compositional bias: low complexity; the sequence is ANAAAAAPAA.

This sequence belongs to the MinC family. As to quaternary structure, interacts with MinD and FtsZ.

Its function is as follows. Cell division inhibitor that blocks the formation of polar Z ring septums. Rapidly oscillates between the poles of the cell to destabilize FtsZ filaments that have formed before they mature into polar Z rings. Prevents FtsZ polymerization. This is Probable septum site-determining protein MinC from Paraburkholderia xenovorans (strain LB400).